A 377-amino-acid polypeptide reads, in one-letter code: tRNA(Met) cytidine acetate ligase (377 aa).

ATP-binding positions include 7-20 (ITEY…HLFH), Gly-100, Asn-153, and Arg-178.

The protein belongs to the TmcAL family.

The protein resides in the cytoplasm. The catalysed reaction is cytidine(34) in elongator tRNA(Met) + acetate + ATP = N(4)-acetylcytidine(34) in elongator tRNA(Met) + AMP + diphosphate. Catalyzes the formation of N(4)-acetylcytidine (ac(4)C) at the wobble position of elongator tRNA(Met), using acetate and ATP as substrates. First activates an acetate ion to form acetyladenylate (Ac-AMP) and then transfers the acetyl group to tRNA to form ac(4)C34. The polypeptide is tRNA(Met) cytidine acetate ligase (Staphylococcus epidermidis (strain ATCC 35984 / DSM 28319 / BCRC 17069 / CCUG 31568 / BM 3577 / RP62A)).